A 706-amino-acid polypeptide reads, in one-letter code: Complement C1r-B subcomponent (706 aa).

Positions 1–16 (MWLFALLVTLFYGVEG) are cleaved as a signal peptide. The region spanning 17–140 (SIYLPQKLYG…KGFLAYYQAV (124 aa)) is the CUB 1 domain. Residues E65, D73, and D118 each coordinate Ca(2+). C70 and C88 are oxidised to a cystine. N124 is a glycosylation site (N-linked (GlcNAc...) asparagine). Ca(2+) contacts are provided by D141, L142, and E144. The EGF-like; calcium-binding domain occupies 141 to 189 (DLDECASQPNSVEEGLQPRCQHLCHNYVGGYFCSCHPGYELQKDGQSCQ). Intrachain disulfides connect C145–C164, C160–C173, C175–C188, and C192–C219. Residues N166, Y167, and G170 each coordinate Ca(2+). N166 bears the (3R)-3-hydroxyasparagine mark. In terms of domain architecture, CUB 2 spans 192 to 304 (CSSELYTEPS…RGWKLHYTTE (113 aa)). S205 carries the post-translational modification Phosphoserine; by CK2. N-linked (GlcNAc...) asparagine glycosylation is present at N220. Positions 242, 252, 289, and 293 each coordinate Ca(2+). A disulfide bridge connects residues C249 and C267. 2 Sushi domains span residues 306–372 (IKCP…RCKI) and 373–448 (KNCG…RCLP). Cystine bridges form between C308/C357, C337/C370, C375/C428, C405/C446, and C450/C578. Residues 463–703 (IIGGQPARPG…YVDWIKKEMG (241 aa)) form the Peptidase S1 domain. Residues H501 and D558 each act as charge relay system in the active site. N582 carries an N-linked (GlcNAc...) asparagine glycan. Cystine bridges form between C621–C640 and C651–C681. Catalysis depends on S655, which acts as the Charge relay system.

Belongs to the peptidase S1 family. In terms of assembly, core component of the complement C1 complex, a calcium-dependent complex composed of 1 molecule of the C1Q subcomplex, 2 molecules of C1R and 2 molecules of C1S. The C1Q subcomplex is composed 18 subunits: 3 chains of C1QA, C1QB, and C1QC trimerize to form 6 collagen-like triple helices connected to six globular ligand-recognition modules. Within the C1 complex, C1R is a dimer of identical chains, each of which is activated by cleavage into two chains, heavy and light, connected by disulfide bonds. In terms of processing, cleaved and activated by autocatalytic processing to generate Complement C1r subcomponent heavy and light chains that are connected by disulfide bonds. The iron and 2-oxoglutarate dependent 3-hydroxylation of aspartate and asparagine is (R) stereospecific within EGF domains.

The protein localises to the secreted. Its subcellular location is the cell surface. The catalysed reaction is Selective cleavage of Lys(or Arg)-|-Ile bond in complement subcomponent C1s to form the active form of C1s (EC 3.4.21.42).. With respect to regulation, activated by the C1Q subcomplex of the C1 complex following C1Q binding to immunoglobulins (IgG or IgM) complexed with antigens to form antigen-antibody complexes on the surface of pathogens. Immunoglobulin-binding promotes autoactivation of C1R, which results in the cleavage of the Arg-Ile bond in the catalytic domain. In terms of biological role, serine protease component of the complement C1 complex, a multiprotein complex that initiates the classical pathway of the complement system, a cascade of proteins that leads to phagocytosis and breakdown of pathogens and signaling that strengthens the adaptive immune system. C1R catalyzes the first enzymatic step in the classical complement pathway: it is activated by the C1Q subcomplex of the C1 complex, which associates with IgG or IgM immunoglobulins complexed with antigens to form antigen-antibody complexes on the surface of pathogens. Immunoglobulin-binding promotes the autocatalytic cleavage and activation of C1R. Activated C1R then cleaves and activates C1S, the second protease of the classical complement pathway. It is unclear if C1R activates C1S within single, strained C1 complexes or between neighboring C1 complexes on surfaces. The chain is Complement C1r-B subcomponent (C1rb) from Mus musculus (Mouse).